Here is a 253-residue protein sequence, read N- to C-terminus: Triosephosphate isomerase (253 aa).

Position 9-11 (9-11 (NWK)) interacts with substrate. Residue H94 is the Electrophile of the active site. E163 acts as the Proton acceptor in catalysis. Substrate is bound by residues G169, S209, and 230–231 (GG).

This sequence belongs to the triosephosphate isomerase family. In terms of assembly, homodimer.

The protein localises to the cytoplasm. It carries out the reaction D-glyceraldehyde 3-phosphate = dihydroxyacetone phosphate. The protein operates within carbohydrate biosynthesis; gluconeogenesis. Its pathway is carbohydrate degradation; glycolysis; D-glyceraldehyde 3-phosphate from glycerone phosphate: step 1/1. Involved in the gluconeogenesis. Catalyzes stereospecifically the conversion of dihydroxyacetone phosphate (DHAP) to D-glyceraldehyde-3-phosphate (G3P). This is Triosephosphate isomerase from Dehalococcoides mccartyi (strain CBDB1).